Here is a 395-residue protein sequence, read N- to C-terminus: Elongation factor Tu (395 aa).

In terms of domain architecture, tr-type G spans 10–204 (KPHVNIGTIG…VVDEYIPTPV (195 aa)). A G1 region spans residues 19 to 26 (GHVDHGKT). Residue 19-26 (GHVDHGKT) participates in GTP binding. T26 contacts Mg(2+). The tract at residues 60–64 (GITIN) is G2. Residues 81 to 84 (DAPG) are G3. GTP contacts are provided by residues 81 to 85 (DAPGH) and 136 to 139 (NKTD). A G4 region spans residues 136–139 (NKTD). The segment at 174-176 (SAL) is G5.

The protein belongs to the TRAFAC class translation factor GTPase superfamily. Classic translation factor GTPase family. EF-Tu/EF-1A subfamily. In terms of assembly, monomer.

The protein localises to the cytoplasm. The enzyme catalyses GTP + H2O = GDP + phosphate + H(+). Its function is as follows. GTP hydrolase that promotes the GTP-dependent binding of aminoacyl-tRNA to the A-site of ribosomes during protein biosynthesis. The polypeptide is Elongation factor Tu (Lactiplantibacillus plantarum (strain ATCC BAA-793 / NCIMB 8826 / WCFS1) (Lactobacillus plantarum)).